Reading from the N-terminus, the 809-residue chain is uncharacterized protein (809 aa).

The MHYT domain occupies 19 to 206 (HDLRLVLVAS…FTGMSAITIV (188 aa)). Transmembrane regions (helical) follow at residues 23–43 (LVLVASAVCLAGCFTTFRLYS), 57–77 (LLLTGLVAGSSVWATHFIAMV), 92–112 (TLLSLMIAALFMASGFAVASA), 122–142 (GGVLIGLGVAAMHYMGMSAFV), 152–172 (ATVGMSAVLGVGGATAALLLA), 186–206 (GMLCLGIVMLHFTGMSAITIV), and 224–244 (TLAVGSITSMIILGGLGAVAI). The PAS domain occupies 254 to 317 (ERIRRLANAA…ADPSREDVRR (64 aa)). Residues 402 to 536 (ESLAVICIDL…GRGVYRFFKR (135 aa)) enclose the GGDEF domain. The 251-residue stretch at 545–795 (RRNLARDLRQ…ALTMWTTAGD (251 aa)) folds into the EAL domain.

It is found in the cell membrane. This is an uncharacterized protein from Caulobacter vibrioides (strain ATCC 19089 / CIP 103742 / CB 15) (Caulobacter crescentus).